The primary structure comprises 688 residues: UvrABC system protein C (688 aa).

Over residues 1-14 (MSPLDQKNKPRGGA) the composition is skewed to basic and acidic residues. The disordered stretch occupies residues 1–20 (MSPLDQKNKPRGGADDLPPE). One can recognise a GIY-YIG domain in the interval 71–149 (NAPGVYRMMN…IKRLRPRFNV (79 aa)). The UVR domain maps to 259-294 (QKVKTEISAAMQQASEDLDFERAAIYRDRLAALSHV).

Belongs to the UvrC family. In terms of assembly, interacts with UvrB in an incision complex.

The protein resides in the cytoplasm. The UvrABC repair system catalyzes the recognition and processing of DNA lesions. UvrC both incises the 5' and 3' sides of the lesion. The N-terminal half is responsible for the 3' incision and the C-terminal half is responsible for the 5' incision. In Mesorhizobium japonicum (strain LMG 29417 / CECT 9101 / MAFF 303099) (Mesorhizobium loti (strain MAFF 303099)), this protein is UvrABC system protein C.